The primary structure comprises 853 residues: DNA mismatch repair protein MutS (853 aa).

614–621 (GPNMGGKS) provides a ligand contact to ATP.

The protein belongs to the DNA mismatch repair MutS family.

Functionally, this protein is involved in the repair of mismatches in DNA. It is possible that it carries out the mismatch recognition step. This protein has a weak ATPase activity. This chain is DNA mismatch repair protein MutS, found in Escherichia coli O7:K1 (strain IAI39 / ExPEC).